The primary structure comprises 185 residues: RRM domain-containing protein ECU09_1470 (185 aa).

2 consecutive RRM domains span residues 8–87 and 101–170; these read NQLA…YAKR and KKVY…PAYE.

The polypeptide is RRM domain-containing protein ECU09_1470 (Encephalitozoon cuniculi (strain GB-M1) (Microsporidian parasite)).